The following is a 555-amino-acid chain: CTP synthase (555 aa).

The interval 1–271 (MVKRGKKTKY…DDKLAELFNI (271 aa)) is amidoligase domain. Serine 19 provides a ligand contact to CTP. Serine 19 lines the UTP pocket. ATP is bound by residues 20–25 (SLGKGL) and aspartate 77. Mg(2+)-binding residues include aspartate 77 and glutamate 145. CTP-binding positions include 152–154 (DIE), 192–197 (KTKPTQ), and lysine 228. Residues 192–197 (KTKPTQ) and lysine 228 each bind UTP. Positions 297 to 537 (RIGIVGKYVE…VKAALEHRDA (241 aa)) constitute a Glutamine amidotransferase type-1 domain. Position 358 (glycine 358) interacts with L-glutamine. Residue cysteine 385 is the Nucleophile; for glutamine hydrolysis of the active site. L-glutamine contacts are provided by residues 386–389 (LGLQ), glutamate 409, and arginine 466. Residues histidine 510 and glutamate 512 contribute to the active site. The interval 536-555 (DAQQRQPSAEVKKLPVGKNG) is disordered.

The protein belongs to the CTP synthase family. In terms of assembly, homotetramer.

It carries out the reaction UTP + L-glutamine + ATP + H2O = CTP + L-glutamate + ADP + phosphate + 2 H(+). The enzyme catalyses L-glutamine + H2O = L-glutamate + NH4(+). It catalyses the reaction UTP + NH4(+) + ATP = CTP + ADP + phosphate + 2 H(+). Its pathway is pyrimidine metabolism; CTP biosynthesis via de novo pathway; CTP from UDP: step 2/2. With respect to regulation, allosterically activated by GTP, when glutamine is the substrate; GTP has no effect on the reaction when ammonia is the substrate. The allosteric effector GTP functions by stabilizing the protein conformation that binds the tetrahedral intermediate(s) formed during glutamine hydrolysis. Inhibited by the product CTP, via allosteric rather than competitive inhibition. Functionally, catalyzes the ATP-dependent amination of UTP to CTP with either L-glutamine or ammonia as the source of nitrogen. Regulates intracellular CTP levels through interactions with the four ribonucleotide triphosphates. The protein is CTP synthase of Anaeromyxobacter dehalogenans (strain 2CP-C).